Here is a 69-residue protein sequence, read N- to C-terminus: Putative membrane protein insertion efficiency factor (69 aa).

The protein belongs to the UPF0161 family.

The protein localises to the cell inner membrane. Its function is as follows. Could be involved in insertion of integral membrane proteins into the membrane. In Geobacter metallireducens (strain ATCC 53774 / DSM 7210 / GS-15), this protein is Putative membrane protein insertion efficiency factor.